We begin with the raw amino-acid sequence, 669 residues long: Gametogenetin-binding protein 2 (669 aa).

Disordered regions lie at residues 375–421 (QEKK…GNPC) and 452–475 (PHSN…SQEG). Basic residues predominate over residues 376–388 (EKKRQKKNRKKNK). Residues 398-408 (ETKSANPSQKN) show a composition bias toward polar residues.

Its subcellular location is the cytoplasm. May be involved in spermatogenesis. The protein is Gametogenetin-binding protein 2 (ggnbp2) of Xenopus tropicalis (Western clawed frog).